Consider the following 551-residue polypeptide: Hydroxylamine reductase (551 aa).

Residues C3, C6, C18, and C25 each coordinate [2Fe-2S] cluster. H249, E273, C317, C405, C433, C459, E493, and K495 together coordinate hybrid [4Fe-2O-2S] cluster. A Cysteine persulfide modification is found at C405.

The protein belongs to the HCP family. It depends on [2Fe-2S] cluster as a cofactor. The cofactor is hybrid [4Fe-2O-2S] cluster.

The protein resides in the cytoplasm. It catalyses the reaction A + NH4(+) + H2O = hydroxylamine + AH2 + H(+). Its function is as follows. Catalyzes the reduction of hydroxylamine to form NH(3) and H(2)O. The sequence is that of Hydroxylamine reductase from Actinobacillus pleuropneumoniae serotype 5b (strain L20).